Reading from the N-terminus, the 831-residue chain is Phenylalanine--tRNA ligase beta subunit (831 aa).

Positions 44–155 (GPVDGPVTVG…GAAEPGADGA (112 aa)) constitute a tRNA-binding domain. The B5 domain occupies 414–489 (WSPPPIRMGV…RLEGLEVIPS (76 aa)). Residues Asp467, Asp473, Glu476, and Glu477 each coordinate Mg(2+). Residues 737–830 (SPYPAVFQDV…AAERVGAVLR (94 aa)) form the FDX-ACB domain.

It belongs to the phenylalanyl-tRNA synthetase beta subunit family. Type 1 subfamily. Tetramer of two alpha and two beta subunits. The cofactor is Mg(2+).

It localises to the cytoplasm. It catalyses the reaction tRNA(Phe) + L-phenylalanine + ATP = L-phenylalanyl-tRNA(Phe) + AMP + diphosphate + H(+). The chain is Phenylalanine--tRNA ligase beta subunit from Mycobacterium bovis (strain ATCC BAA-935 / AF2122/97).